The chain runs to 175 residues: Putative transmembrane protein ORF175 (175 aa).

A run of 4 helical transmembrane segments spans residues 14–34, 58–78, 101–121, and 142–162; these read LGIV…GSFM, VLSN…AIAF, IVVA…FALF, and ITPF…VLSI.

The protein localises to the host membrane. The chain is Putative transmembrane protein ORF175 from Acidianus two-tailed virus (ATV).